We begin with the raw amino-acid sequence, 283 residues long: Pantothenate synthetase (283 aa).

Methionine 30–histidine 37 serves as a coordination point for ATP. Histidine 37 acts as the Proton donor in catalysis. Glutamine 61 lines the (R)-pantoate pocket. Glutamine 61 contributes to the beta-alanine binding site. ATP is bound at residue glycine 149–aspartate 152. Glutamine 155 is a (R)-pantoate binding site. Residues valine 178 and leucine 186–arginine 189 contribute to the ATP site.

It belongs to the pantothenate synthetase family. As to quaternary structure, homodimer.

The protein localises to the cytoplasm. It carries out the reaction (R)-pantoate + beta-alanine + ATP = (R)-pantothenate + AMP + diphosphate + H(+). The protein operates within cofactor biosynthesis; (R)-pantothenate biosynthesis; (R)-pantothenate from (R)-pantoate and beta-alanine: step 1/1. Its function is as follows. Catalyzes the condensation of pantoate with beta-alanine in an ATP-dependent reaction via a pantoyl-adenylate intermediate. The chain is Pantothenate synthetase from Azotobacter vinelandii (strain DJ / ATCC BAA-1303).